A 547-amino-acid chain; its full sequence is Chaperonin GroEL 1 (547 aa).

Residues 30-33 (TLGP), lysine 51, 87-91 (DGTTT), glycine 415, and aspartate 496 contribute to the ATP site. The segment at 525-547 (KPEPKSPAGGPGMGGMGGMDGMM) is disordered. The span at 533-547 (GGPGMGGMGGMDGMM) shows a compositional bias: gly residues.

The protein belongs to the chaperonin (HSP60) family. In terms of assembly, forms a cylinder of 14 subunits composed of two heptameric rings stacked back-to-back. Interacts with the co-chaperonin GroES.

Its subcellular location is the cytoplasm. The enzyme catalyses ATP + H2O + a folded polypeptide = ADP + phosphate + an unfolded polypeptide.. In terms of biological role, together with its co-chaperonin GroES, plays an essential role in assisting protein folding. The GroEL-GroES system forms a nano-cage that allows encapsulation of the non-native substrate proteins and provides a physical environment optimized to promote and accelerate protein folding. This Cereibacter sphaeroides (strain ATCC 17023 / DSM 158 / JCM 6121 / CCUG 31486 / LMG 2827 / NBRC 12203 / NCIMB 8253 / ATH 2.4.1.) (Rhodobacter sphaeroides) protein is Chaperonin GroEL 1.